A 328-amino-acid polypeptide reads, in one-letter code: Malate dehydrogenase 1 (328 aa).

12–18 (GAAGQIA) is an NAD(+) binding site. Substrate-binding residues include Arg-93 and Arg-99. NAD(+) is bound by residues Asn-106, Gln-113, and 130–132 (VGN). Substrate contacts are provided by Asn-132 and Arg-163. The active-site Proton acceptor is His-188.

It belongs to the LDH/MDH superfamily. MDH type 2 family.

The catalysed reaction is (S)-malate + NAD(+) = oxaloacetate + NADH + H(+). Functionally, catalyzes the reversible oxidation of malate to oxaloacetate. The chain is Malate dehydrogenase 1 from Burkholderia vietnamiensis (strain G4 / LMG 22486) (Burkholderia cepacia (strain R1808)).